The chain runs to 418 residues: Probable basic-leucine zipper transcription factor E (418 aa).

Residues 8–47 (IQQIQQLHMLLQQQQQQQQQQQQQQQQQQQQLQQQNFQLT) adopt a coiled-coil conformation. 2 stretches are compositionally biased toward low complexity: residues 51-71 (FQIPVNNNNNNNNNSNNNNNN) and 95-134 (INTTTTTTNNNNNNNNNNNNNNNNNNNNNNNNNNNNNNNT). Disordered regions lie at residues 51-75 (FQIPVNNNNNNNNNSNNNNNNETAF), 95-149 (INTT…KKQK), 165-196 (PTAAVKKKPPAKKSAKNAASQPTSPTLSTTNT), and 211-252 (KNQE…KNRR). Residues 169–179 (VKKKPPAKKSA) are compositionally biased toward basic residues. Residues 180–196 (KNAASQPTSPTLSTTNT) are compositionally biased toward low complexity. A compositionally biased stretch (acidic residues) spans 220 to 239 (DNSEESDSDEEDFENGDNEN). In terms of domain architecture, bZIP spans 246-309 (GDRKNRRLLK…QLMKDKVRYL (64 aa)). The interval 248–268 (RKNRRLLKNREAAQLFRQRQK) is basic motif. Positions 274–281 (LESKASSL) are leucine-zipper. The stretch at 324-362 (SVVNQDNINNLNNNLNGLQNQQNNNNNNNNNNNNNNNNN) forms a coiled coil. Residues 336–418 (NNLNGLQNQQ…DSLLFNLPPD (83 aa)) are disordered.

This sequence belongs to the bZIP family.

The protein resides in the nucleus. Functionally, probable transcriptional regulator. This chain is Probable basic-leucine zipper transcription factor E (bzpE), found in Dictyostelium discoideum (Social amoeba).